A 217-amino-acid polypeptide reads, in one-letter code: Non-structural protein NS3 (217 aa).

Belongs to the orbivirus NS3 family.

Its function is as follows. May play a role in the release of virions from infected cells. This Camelus dromedarius (Dromedary) protein is Non-structural protein NS3 (Segment-10).